A 260-amino-acid chain; its full sequence is Putative imidazole glycerol phosphate synthase subunit hisF3 (260 aa).

Aspartate 135 is a catalytic residue.

The protein belongs to the HisA/HisF family. In terms of assembly, heterodimer of HisH and HisF.

It localises to the cytoplasm. It catalyses the reaction 5-[(5-phospho-1-deoxy-D-ribulos-1-ylimino)methylamino]-1-(5-phospho-beta-D-ribosyl)imidazole-4-carboxamide + L-glutamine = D-erythro-1-(imidazol-4-yl)glycerol 3-phosphate + 5-amino-1-(5-phospho-beta-D-ribosyl)imidazole-4-carboxamide + L-glutamate + H(+). It functions in the pathway amino-acid biosynthesis; L-histidine biosynthesis; L-histidine from 5-phospho-alpha-D-ribose 1-diphosphate: step 5/9. In terms of biological role, IGPS catalyzes the conversion of PRFAR and glutamine to IGP, AICAR and glutamate. The HisF subunit catalyzes the cyclization activity that produces IGP and AICAR from PRFAR using the ammonia provided by the HisH subunit. This chain is Putative imidazole glycerol phosphate synthase subunit hisF3 (hisF3), found in Vibrio vulnificus (strain YJ016).